The chain runs to 358 residues: Trace amine-associated receptor 7e (358 aa).

At 1–47 (MATGDDSFLWDQDSILSRDLFSATSAELCYENLNRSCVRSPYSPGPR) the chain is on the extracellular side. An N-linked (GlcNAc...) asparagine glycan is attached at Asn34. 2 disulfides stabilise this stretch: Cys37/Cys201 and Cys120/Cys205. Residues 48-68 (LILYAVFGFGAVLAVCGNLLV) form a helical membrane-spanning segment. At 69–83 (MTSILHFRQLHSPAN) the chain is on the cytoplasmic side. The helical transmembrane segment at 84-104 (FLVASLACADFLVGLTVMPFS) threads the bilayer. Over 105–121 (TVRSVEGCWYFGEIYCK) the chain is Extracellular. A helical membrane pass occupies residues 122–143 (LHTCFDVSFCSSSIFHLCFISV). The Cytoplasmic segment spans residues 144-166 (DRYIAVSDPLIYPTRFTASVSNK). A helical transmembrane segment spans residues 167–187 (CITFSWLLSISYGFSLIYTGA). Residues 188 to 212 (SEAGLEDLVSALTCVGGCQLAVNQS) are Extracellular-facing. N-linked (GlcNAc...) asparagine glycosylation occurs at Asn210. Residues 213-233 (WVFINFLLFLIPTLVMITVYS) form a helical membrane-spanning segment. Residues 234–274 (KIFLIAKQQAQNIEKMSKQTARASDSYKDRVAKRERKAAKT) are Cytoplasmic-facing. A helical membrane pass occupies residues 275–295 (LGIAVAAFLLSWLPYFIDSFI). Residues 296-309 (DAFLGFITPTYVYE) are Extracellular-facing. The helical transmembrane segment at 310–333 (ILVWIAYYNSAMNPLIYAFFYPWF) threads the bilayer. Over 334–358 (RKAIKLTVTGKILRENSSTTNLFPE) the chain is Cytoplasmic.

The protein belongs to the G-protein coupled receptor 1 family. As to expression, specifically expressed in neurons of the olfactory epithelium.

It localises to the cell membrane. Functionally, olfactory receptor specific for N,N-dimethylalkylamines trace amines. Trace amine compounds are enriched in animal body fluids and act on trace amine-associated receptors (TAARs) to elicit both intraspecific and interspecific innate behaviors. Ligand-binding causes a conformation change that triggers signaling via G(s)-class of G alpha proteins (GNAL or GNAS). This chain is Trace amine-associated receptor 7e, found in Mus musculus (Mouse).